We begin with the raw amino-acid sequence, 50 residues long: Ampulexin 2 (50 aa).

A signal peptide spans 1-26; the sequence is MKAIMVLFYVMTLTIIGSFSMVSGSP.

As to quaternary structure, dimer; disulfide-linked. Expressed in venom sac and, to a lesser extent, in venom gland. Not expressed in brain.

The protein resides in the secreted. Functionally, amphipathic peptide which probably adopts an alpha-helical structure. Has no antimicrobial activity against E.coli DH5alpha or B.thuringiensis. Is not cytotoxic in vitro. This is Ampulexin 2 from Ampulex compressa (Emerald cockroach wasp).